Reading from the N-terminus, the 67-residue chain is ATP synthase F(0) complex subunit 8 (67 aa).

The helical transmembrane segment at 8–24 (TWFTTILATITTLFILF) threads the bilayer. Lysine 54 carries the post-translational modification N6-acetyllysine; alternate. Lysine 54 carries the post-translational modification N6-succinyllysine; alternate. Residue lysine 57 is modified to N6-acetyllysine.

This sequence belongs to the ATPase protein 8 family. In terms of assembly, component of the ATP synthase complex composed at least of ATP5F1A/subunit alpha, ATP5F1B/subunit beta, ATP5MC1/subunit c (homooctomer), MT-ATP6/subunit a, MT-ATP8/subunit 8, ATP5ME/subunit e, ATP5MF/subunit f, ATP5MG/subunit g, ATP5MK/subunit k, ATP5MJ/subunit j, ATP5F1C/subunit gamma, ATP5F1D/subunit delta, ATP5F1E/subunit epsilon, ATP5PF/subunit F6, ATP5PB/subunit b, ATP5PD/subunit d, ATP5PO/subunit OSCP. ATP synthase complex consists of a soluble F(1) head domain (subunits alpha(3) and beta(3)) - the catalytic core - and a membrane F(0) domain - the membrane proton channel (subunits c, a, 8, e, f, g, k and j). These two domains are linked by a central stalk (subunits gamma, delta, and epsilon) rotating inside the F1 region and a stationary peripheral stalk (subunits F6, b, d, and OSCP). Interacts with PRICKLE3.

Its subcellular location is the mitochondrion membrane. In terms of biological role, subunit 8, of the mitochondrial membrane ATP synthase complex (F(1)F(0) ATP synthase or Complex V) that produces ATP from ADP in the presence of a proton gradient across the membrane which is generated by electron transport complexes of the respiratory chain. ATP synthase complex consist of a soluble F(1) head domain - the catalytic core - and a membrane F(1) domain - the membrane proton channel. These two domains are linked by a central stalk rotating inside the F(1) region and a stationary peripheral stalk. During catalysis, ATP synthesis in the catalytic domain of F(1) is coupled via a rotary mechanism of the central stalk subunits to proton translocation. In vivo, can only synthesize ATP although its ATP hydrolase activity can be activated artificially in vitro. Part of the complex F(0) domain. The sequence is that of ATP synthase F(0) complex subunit 8 from Talpa europaea (European mole).